Here is a 72-residue protein sequence, read N- to C-terminus: Large ribosomal subunit protein uL29 (72 aa).

This sequence belongs to the universal ribosomal protein uL29 family.

In Chlamydia abortus (strain DSM 27085 / S26/3) (Chlamydophila abortus), this protein is Large ribosomal subunit protein uL29.